A 125-amino-acid polypeptide reads, in one-letter code: MORF4 family-associated protein 1 (125 aa).

Positions 76 to 99 are disordered; sequence ESALNHLQGAGGAEPRGPRAEKAD. A coiled-coil region spans residues 94–124; that stretch reads RAEKADEKAQEMAKMAEMLVQLVRRIEKSES.

The protein belongs to the MORF4 family-associated protein family. Found in a complex composed of MORF4L1, MRFAP1 and RB1. Interacts via its N-terminus with MORF4L1. Interacts with CSTB and MORF4L2.

The protein resides in the nucleus. It is found in the cytoplasm. The protein localises to the perinuclear region. This Rattus norvegicus (Rat) protein is MORF4 family-associated protein 1.